A 160-amino-acid polypeptide reads, in one-letter code: Ribosomal RNA large subunit methyltransferase H (160 aa).

Residues L77 and G109 each contribute to the S-adenosyl-L-methionine site.

It belongs to the RNA methyltransferase RlmH family. As to quaternary structure, homodimer.

The protein localises to the cytoplasm. It catalyses the reaction pseudouridine(1915) in 23S rRNA + S-adenosyl-L-methionine = N(3)-methylpseudouridine(1915) in 23S rRNA + S-adenosyl-L-homocysteine + H(+). Its function is as follows. Specifically methylates the pseudouridine at position 1915 (m3Psi1915) in 23S rRNA. In Moorella thermoacetica (strain ATCC 39073 / JCM 9320), this protein is Ribosomal RNA large subunit methyltransferase H.